Here is a 705-residue protein sequence, read N- to C-terminus: 3-hydroxypropionate--CoA ligase [ADP-forming] (705 aa).

In terms of domain architecture, ATP-grasp spans 25–61 (KSILKNYGVKVPPYALVTSAEEAAKEAKKIGFPLVMK). Position 51–61 (51–61 (AKKIGFPLVMK)) interacts with ATP.

It in the N-terminal section; belongs to the acetate CoA ligase beta subunit family. This sequence in the C-terminal section; belongs to the acetate CoA ligase alpha subunit family. Requires Mg(2+) as cofactor. The cofactor is Mn(2+).

The enzyme catalyses 3-hydroxypropanoate + ATP + CoA = 3-hydroxypropanoyl-CoA + ADP + phosphate. Its function is as follows. Involved in thaumarchaeal hydroxypropionate/hydroxybutyrate (HP/HB) cycle, a modified version of the autotrophic HP/HB cycle of Crenarchaeota. Catalyzes the formation of 3-hydroxypropionyl-CoA, ADP and phosphate from 3-hydroxypropionate, coenzyme A (CoA) and ATP. Can also use 4-hydroxybutyrate, propionate and butyrate, with poor catalytic efficiency. The polypeptide is 3-hydroxypropionate--CoA ligase [ADP-forming] (Nitrosopumilus maritimus (strain SCM1)).